Reading from the N-terminus, the 269-residue chain is Formamidopyrimidine-DNA glycosylase (269 aa).

Catalysis depends on proline 2, which acts as the Schiff-base intermediate with DNA. The active-site Proton donor is glutamate 3. Lysine 57 functions as the Proton donor; for beta-elimination activity in the catalytic mechanism. Positions 90, 109, and 150 each coordinate DNA. An FPG-type zinc finger spans residues 235-269; the sequence is QVYGRKGEPCRVCGTPIVATKHAQRATFYCRQCQK. Arginine 259 serves as the catalytic Proton donor; for delta-elimination activity.

The protein belongs to the FPG family. In terms of assembly, monomer. It depends on Zn(2+) as a cofactor.

The enzyme catalyses Hydrolysis of DNA containing ring-opened 7-methylguanine residues, releasing 2,6-diamino-4-hydroxy-5-(N-methyl)formamidopyrimidine.. The catalysed reaction is 2'-deoxyribonucleotide-(2'-deoxyribose 5'-phosphate)-2'-deoxyribonucleotide-DNA = a 3'-end 2'-deoxyribonucleotide-(2,3-dehydro-2,3-deoxyribose 5'-phosphate)-DNA + a 5'-end 5'-phospho-2'-deoxyribonucleoside-DNA + H(+). Its function is as follows. Involved in base excision repair of DNA damaged by oxidation or by mutagenic agents. Acts as a DNA glycosylase that recognizes and removes damaged bases. Has a preference for oxidized purines, such as 7,8-dihydro-8-oxoguanine (8-oxoG). Has AP (apurinic/apyrimidinic) lyase activity and introduces nicks in the DNA strand. Cleaves the DNA backbone by beta-delta elimination to generate a single-strand break at the site of the removed base with both 3'- and 5'-phosphates. The polypeptide is Formamidopyrimidine-DNA glycosylase (Shigella dysenteriae serotype 1 (strain Sd197)).